The sequence spans 927 residues: Huntington interacting protein related 1 (927 aa).

In terms of domain architecture, ENTH spans 7–136; the sequence is AREVFVRAQL…TFHNKYPVVP (130 aa). A coiled-coil region spans residues 336 to 524; the sequence is RAVEDEKFAK…RESHANQLVQ (189 aa). The I/LWEQ domain occupies 673 to 914; sequence QTDIDKDVVG…ALRKQHYHMA (242 aa).

It belongs to the SLA2 family.

It is found in the cytoplasm. It localises to the cytoskeleton. Its function is as follows. Regulates pre-synaptic vesicle recycling at neuromuscular junctions of mechanosensory neurons. Plays a role in maintaining a normal defecation cycle. This chain is Huntington interacting protein related 1 (hipr-1), found in Caenorhabditis elegans.